The chain runs to 166 residues: NAD(P)H-quinone oxidoreductase subunit I, chloroplastic (166 aa).

4Fe-4S ferredoxin-type domains are found at residues Gly55 to Lys84 and Leu95 to Glu124. Positions 64, 67, 70, 74, 104, 107, 110, and 114 each coordinate [4Fe-4S] cluster.

This sequence belongs to the complex I 23 kDa subunit family. As to quaternary structure, NDH is composed of at least 16 different subunits, 5 of which are encoded in the nucleus. Requires [4Fe-4S] cluster as cofactor.

The protein resides in the plastid. Its subcellular location is the chloroplast thylakoid membrane. The catalysed reaction is a plastoquinone + NADH + (n+1) H(+)(in) = a plastoquinol + NAD(+) + n H(+)(out). The enzyme catalyses a plastoquinone + NADPH + (n+1) H(+)(in) = a plastoquinol + NADP(+) + n H(+)(out). NDH shuttles electrons from NAD(P)H:plastoquinone, via FMN and iron-sulfur (Fe-S) centers, to quinones in the photosynthetic chain and possibly in a chloroplast respiratory chain. The immediate electron acceptor for the enzyme in this species is believed to be plastoquinone. Couples the redox reaction to proton translocation, and thus conserves the redox energy in a proton gradient. This Rensonia salvadorica protein is NAD(P)H-quinone oxidoreductase subunit I, chloroplastic.